The chain runs to 126 residues: 13 kDa ribonucleoprotein-associated protein (126 aa).

The protein belongs to the eukaryotic ribosomal protein eL8 family. Component of the U3 snoRNP particle. Binds to the C'/D and B/C motifs in U3 snoRNA. Component of the 25S U4/U6.U5 tri-snRNP particle, a subcomplex of the spliceosome. Binds to the 5' stem-loop of U4 snRNA.

It localises to the nucleus. The protein resides in the nucleolus. Its function is as follows. Common component of the spliceosome and rRNA processing machinery. In association with the spliceosomal U4/U6.U5 tri-snRNP particle, required for splicing of pre-mRNA. In association with box C/D snoRNPs, required for processing of pre-ribosomal RNA (rRNA) and site-specific 2'-O-methylation of substrate RNAs. Essential for the accumulation and stability of U4 snRNA, U6 snRNA, and box C/D snoRNAs. This Debaryomyces hansenii (strain ATCC 36239 / CBS 767 / BCRC 21394 / JCM 1990 / NBRC 0083 / IGC 2968) (Yeast) protein is 13 kDa ribonucleoprotein-associated protein (SNU13).